The following is a 447-amino-acid chain: Adenylosuccinate synthetase (447 aa).

Residues 12–18 (GDEGKGK) and 40–42 (GHT) contribute to the GTP site. Aspartate 13 functions as the Proton acceptor in the catalytic mechanism. Aspartate 13 and glycine 40 together coordinate Mg(2+). IMP is bound by residues 13–16 (DEGK), 38–41 (NAGH), threonine 128, arginine 142, glutamine 223, threonine 238, and arginine 302. The Proton donor role is filled by histidine 41. 298–304 (TTTGRRR) lines the substrate pocket. Residues arginine 304, 330 to 332 (KLD), and 412 to 414 (SLG) each bind GTP.

Belongs to the adenylosuccinate synthetase family. Homodimer. Requires Mg(2+) as cofactor.

It is found in the cytoplasm. It carries out the reaction IMP + L-aspartate + GTP = N(6)-(1,2-dicarboxyethyl)-AMP + GDP + phosphate + 2 H(+). Its pathway is purine metabolism; AMP biosynthesis via de novo pathway; AMP from IMP: step 1/2. Its function is as follows. Plays an important role in the de novo pathway of purine nucleotide biosynthesis. Catalyzes the first committed step in the biosynthesis of AMP from IMP. The polypeptide is Adenylosuccinate synthetase (Microcystis aeruginosa (strain NIES-843 / IAM M-2473)).